Consider the following 296-residue polypeptide: tRNA dimethylallyltransferase (296 aa).

2–9 (GPTASGKT) serves as a coordination point for ATP. Substrate is bound at residue 4-9 (TASGKT). Interaction with substrate tRNA stretches follow at residues 27–30 (DSAL), 151–155 (QRLSR), and 232–237 (RCVGYR).

It belongs to the IPP transferase family. Monomer. It depends on Mg(2+) as a cofactor.

It carries out the reaction adenosine(37) in tRNA + dimethylallyl diphosphate = N(6)-dimethylallyladenosine(37) in tRNA + diphosphate. In terms of biological role, catalyzes the transfer of a dimethylallyl group onto the adenine at position 37 in tRNAs that read codons beginning with uridine, leading to the formation of N6-(dimethylallyl)adenosine (i(6)A). The polypeptide is tRNA dimethylallyltransferase (Shewanella sp. (strain MR-7)).